A 68-amino-acid polypeptide reads, in one-letter code: MRQGIHPEYHHDTVVKCACGNTFTTGSVKPELKVEICSKCHPFFTGKQKIVDVGGRVDKFNKRFNLNK.

The Zn(2+) site is built by Cys-17, Cys-19, Cys-37, and Cys-40.

This sequence belongs to the bacterial ribosomal protein bL31 family. Type A subfamily. In terms of assembly, part of the 50S ribosomal subunit. Requires Zn(2+) as cofactor.

Its function is as follows. Binds the 23S rRNA. This is Large ribosomal subunit protein bL31 from Clostridium perfringens (strain ATCC 13124 / DSM 756 / JCM 1290 / NCIMB 6125 / NCTC 8237 / Type A).